Consider the following 241-residue polypeptide: Small ribosomal subunit protein uS2c (241 aa).

The protein belongs to the universal ribosomal protein uS2 family.

Its subcellular location is the plastid. The protein resides in the chloroplast. The polypeptide is Small ribosomal subunit protein uS2c (rps2) (Porphyra purpurea (Red seaweed)).